Reading from the N-terminus, the 205-residue chain is ATP-dependent dethiobiotin synthetase BioD (205 aa).

Mg(2+) is bound at residue Thr-16. Residue Lys-32 is part of the active site. Residue Thr-36 participates in substrate binding. Mg(2+) is bound at residue Glu-97. Residue 97–100 (EGAG) coordinates ATP.

This sequence belongs to the dethiobiotin synthetase family. As to quaternary structure, homodimer. Requires Mg(2+) as cofactor.

It localises to the cytoplasm. It catalyses the reaction (7R,8S)-7,8-diammoniononanoate + CO2 + ATP = (4R,5S)-dethiobiotin + ADP + phosphate + 3 H(+). It functions in the pathway cofactor biosynthesis; biotin biosynthesis; biotin from 7,8-diaminononanoate: step 1/2. Catalyzes a mechanistically unusual reaction, the ATP-dependent insertion of CO2 between the N7 and N8 nitrogen atoms of 7,8-diaminopelargonic acid (DAPA, also called 7,8-diammoniononanoate) to form a ureido ring. The polypeptide is ATP-dependent dethiobiotin synthetase BioD (Paramagnetospirillum magneticum (strain ATCC 700264 / AMB-1) (Magnetospirillum magneticum)).